A 332-amino-acid polypeptide reads, in one-letter code: Ribosomal RNA small subunit methyltransferase H (332 aa).

S-adenosyl-L-methionine is bound by residues 34 to 36 (GGH), aspartate 59, phenylalanine 86, aspartate 112, and glutamine 119.

This sequence belongs to the methyltransferase superfamily. RsmH family.

It is found in the cytoplasm. The catalysed reaction is cytidine(1402) in 16S rRNA + S-adenosyl-L-methionine = N(4)-methylcytidine(1402) in 16S rRNA + S-adenosyl-L-homocysteine + H(+). Functionally, specifically methylates the N4 position of cytidine in position 1402 (C1402) of 16S rRNA. This Chlorobium phaeobacteroides (strain BS1) protein is Ribosomal RNA small subunit methyltransferase H.